Here is a 144-residue protein sequence, read N- to C-terminus: Cytochrome c-type biogenesis protein CcmE (144 aa).

Residues 1 to 7 are Cytoplasmic-facing; the sequence is MTRKQKR. A helical; Signal-anchor for type II membrane protein membrane pass occupies residues 8-28; sequence LAVIGSGMGFLALAAALTFYA. The Periplasmic portion of the chain corresponds to 29-144; the sequence is LGQQTSYFYM…LKKDGLWQEQ (116 aa). Residues histidine 122 and tyrosine 126 each contribute to the heme site.

The protein belongs to the CcmE/CycJ family.

Its subcellular location is the cell inner membrane. Functionally, heme chaperone required for the biogenesis of c-type cytochromes. Transiently binds heme delivered by CcmC and transfers the heme to apo-cytochromes in a process facilitated by CcmF and CcmH. The protein is Cytochrome c-type biogenesis protein CcmE of Chelativorans sp. (strain BNC1).